The primary structure comprises 462 residues: Glutamate-1-semialdehyde 2,1-aminomutase (462 aa).

Residues 178–200 (DDPQRPASPRSQSSRGLPSSPGV) form a disordered region. Residues 182–192 (RPASPRSQSSR) show a composition bias toward low complexity. K297 is subject to N6-(pyridoxal phosphate)lysine.

Belongs to the class-III pyridoxal-phosphate-dependent aminotransferase family. HemL subfamily. Homodimer. Pyridoxal 5'-phosphate serves as cofactor.

The protein resides in the cytoplasm. The enzyme catalyses (S)-4-amino-5-oxopentanoate = 5-aminolevulinate. Its pathway is porphyrin-containing compound metabolism; protoporphyrin-IX biosynthesis; 5-aminolevulinate from L-glutamyl-tRNA(Glu): step 2/2. In Mycobacterium bovis (strain ATCC BAA-935 / AF2122/97), this protein is Glutamate-1-semialdehyde 2,1-aminomutase (hemL).